Reading from the N-terminus, the 67-residue chain is Large ribosomal subunit protein uL29 (67 aa).

Belongs to the universal ribosomal protein uL29 family.

The sequence is that of Large ribosomal subunit protein uL29 from Acetivibrio thermocellus (strain ATCC 27405 / DSM 1237 / JCM 9322 / NBRC 103400 / NCIMB 10682 / NRRL B-4536 / VPI 7372) (Clostridium thermocellum).